A 207-amino-acid polypeptide reads, in one-letter code: Large ribosomal subunit protein uL3 (207 aa).

The interval Gly119–Arg143 is disordered.

The protein belongs to the universal ribosomal protein uL3 family. Part of the 50S ribosomal subunit. Forms a cluster with proteins L14 and L19.

In terms of biological role, one of the primary rRNA binding proteins, it binds directly near the 3'-end of the 23S rRNA, where it nucleates assembly of the 50S subunit. This is Large ribosomal subunit protein uL3 from Ligilactobacillus salivarius (strain UCC118) (Lactobacillus salivarius).